Reading from the N-terminus, the 479-residue chain is Cardiolipin synthase (479 aa).

A run of 2 helical transmembrane segments spans residues 5-25 and 34-54; these read SLLL…IIFL and WAWV…YLIF. 2 consecutive PLD phosphodiesterase domains span residues 216 to 243 and 392 to 419; these read INYR…GDEY and QNGF…DVRS. Residues histidine 221, lysine 223, aspartate 228, histidine 397, lysine 399, and aspartate 404 contribute to the active site.

This sequence belongs to the phospholipase D family. Cardiolipin synthase subfamily.

The protein resides in the cell membrane. The enzyme catalyses 2 a 1,2-diacyl-sn-glycero-3-phospho-(1'-sn-glycerol) = a cardiolipin + glycerol. Functionally, catalyzes the reversible phosphatidyl group transfer from one phosphatidylglycerol molecule to another to form cardiolipin (CL) (diphosphatidylglycerol) and glycerol. This is Cardiolipin synthase (cls) from Oceanobacillus iheyensis (strain DSM 14371 / CIP 107618 / JCM 11309 / KCTC 3954 / HTE831).